The primary structure comprises 219 residues: MSQSQRNSDGWTPRTRLGRMVQDGDVTSMEQALNSGLPLKEPELVDQLLPGLDDEVLDINMVQRMTDSGRRVKFRCVVAIGNRNGFLGYAEGRDDQVGSAIQKAIDVAKLNLISVDRGSGSWEDSAGGVNSLTRNAEGKAGSVTVEVMPAPQGLGLAAAETVSNILELAGVEDAWTRSNGNTRTTVNLAKATYNALRNASQSRTPRRAAAKQREQEVSE.

The region spanning 52–115 (LDDEVLDINM…DVAKLNLISV (64 aa)) is the S5 DRBM domain. Residues 196–219 (LRNASQSRTPRRAAAKQREQEVSE) are disordered.

It belongs to the universal ribosomal protein uS5 family. Part of the 30S ribosomal subunit. Contacts protein S4.

In terms of biological role, with S4 and S12 plays an important role in translational accuracy. The protein is Small ribosomal subunit protein uS5 of Haloquadratum walsbyi (strain DSM 16790 / HBSQ001).